Reading from the N-terminus, the 467-residue chain is Cell division protein FtsP (467 aa).

Residues 1 to 28 constitute a signal peptide (tat-type signal); sequence MRSLTRRDFLKSGILASSLSCIPQSVMA.

It belongs to the FtsP family. In terms of processing, predicted to be exported by the Tat system. The position of the signal peptide cleavage has not been experimentally proven.

It localises to the periplasm. Functionally, cell division protein that is required for growth during stress conditions. May be involved in protecting or stabilizing the divisomal assembly under conditions of stress. This chain is Cell division protein FtsP, found in Histophilus somni (strain 2336) (Haemophilus somnus).